The sequence spans 66 residues: COP-associated protein (66 aa).

One can recognise an HMA domain in the interval 1-66 (MKVTFQVPSI…ALLDAGQEVV (66 aa)). 2 residues coordinate Cu cation: Cys12 and Cys15.

Part of a cation-transporting system which is associated with copper export out of the H.pylori cells. This Helicobacter pylori (strain J99 / ATCC 700824) (Campylobacter pylori J99) protein is COP-associated protein (copP).